Here is a 207-residue protein sequence, read N- to C-terminus: MGMLEARELLCERDERTLFSGLSFTLNAGEWVQITGSNGAGKTTLLRLLTGLSRPDAGEVLWQGQPLHQVRDSYHQNLLWIGHQPGIKTRLTALENLHFYHRDGDTAQCLEALAQAGLAGFEDIPVNQLSAGQQRRVALARLWLTRATLWILDEPFTAIDVNGVDRLTQRMAQHTEQGGIVILTTHQPLNVAESKIRRISLTQTGAA.

The ABC transporter domain maps to 4–207 (LEARELLCER…RISLTQTGAA (204 aa)). ATP is bound at residue 36-43 (GSNGAGKT).

The protein belongs to the ABC transporter superfamily. CcmA exporter (TC 3.A.1.107) family. In terms of assembly, the complex is composed of two ATP-binding proteins (CcmA) and two transmembrane proteins (CcmB).

It localises to the cell inner membrane. The enzyme catalyses heme b(in) + ATP + H2O = heme b(out) + ADP + phosphate + H(+). Functionally, part of the ABC transporter complex CcmAB involved in the biogenesis of c-type cytochromes; once thought to export heme, this seems not to be the case, but its exact role is uncertain. Responsible for energy coupling to the transport system. This Escherichia coli (strain UTI89 / UPEC) protein is Cytochrome c biogenesis ATP-binding export protein CcmA.